A 637-amino-acid chain; its full sequence is 1-deoxy-D-xylulose-5-phosphate synthase (637 aa).

Residues His76 and 117–119 (GHS) contribute to the thiamine diphosphate site. Mg(2+) is bound at residue Asp148. Thiamine diphosphate-binding positions include 149–150 (GA), Asn177, Tyr294, and Glu381. Asn177 is a binding site for Mg(2+).

It belongs to the transketolase family. DXPS subfamily. Homodimer. Requires Mg(2+) as cofactor. Thiamine diphosphate is required as a cofactor.

It carries out the reaction D-glyceraldehyde 3-phosphate + pyruvate + H(+) = 1-deoxy-D-xylulose 5-phosphate + CO2. It participates in metabolic intermediate biosynthesis; 1-deoxy-D-xylulose 5-phosphate biosynthesis; 1-deoxy-D-xylulose 5-phosphate from D-glyceraldehyde 3-phosphate and pyruvate: step 1/1. Functionally, catalyzes the acyloin condensation reaction between C atoms 2 and 3 of pyruvate and glyceraldehyde 3-phosphate to yield 1-deoxy-D-xylulose-5-phosphate (DXP). The polypeptide is 1-deoxy-D-xylulose-5-phosphate synthase (Neisseria meningitidis serogroup B (strain ATCC BAA-335 / MC58)).